The sequence spans 247 residues: Uridylate kinase (247 aa).

17-20 (KFSG) is a binding site for ATP. Gly-59 contacts UMP. Positions 60 and 64 each coordinate ATP. UMP-binding positions include Asp-79 and 140–147 (TGNPFFTT). Residues Thr-167, Tyr-173, and Asp-176 each coordinate ATP.

This sequence belongs to the UMP kinase family. As to quaternary structure, homohexamer.

The protein localises to the cytoplasm. It carries out the reaction UMP + ATP = UDP + ADP. It functions in the pathway pyrimidine metabolism; CTP biosynthesis via de novo pathway; UDP from UMP (UMPK route): step 1/1. With respect to regulation, inhibited by UTP. In terms of biological role, catalyzes the reversible phosphorylation of UMP to UDP. This chain is Uridylate kinase, found in Legionella pneumophila (strain Lens).